A 460-amino-acid polypeptide reads, in one-letter code: Probable fibrosin-1 (460 aa).

A Glycyl lysine isopeptide (Lys-Gly) (interchain with G-Cter in SUMO2) cross-link involves residue lysine 8. Disordered regions lie at residues 40 to 79, 205 to 311, and 406 to 460; these read SLQG…FRPP, FAQK…KEEA, and YSRL…RADR. Positions 212–223 are enriched in pro residues; that stretch reads GAPPAFASPPDP. Arginine 229 and arginine 239 each carry asymmetric dimethylarginine. Basic and acidic residues predominate over residues 248–272; the sequence is GSDKERPVERREPSITKEEKDRDLP. Serine 281 is subject to Phosphoserine. Positions 288–311 are enriched in basic and acidic residues; the sequence is RAGEEGPRPTKESVRVKEERKEEA. The span at 436 to 453 shows a compositional bias: pro residues; that stretch reads APPPLVPAPRPSSPPRGP.

This chain is Probable fibrosin-1 (FBRS), found in Homo sapiens (Human).